A 599-amino-acid polypeptide reads, in one-letter code: UPF0313 protein UNCMA_01890 (599 aa).

The region spanning 281 to 557 (EDIPALRTVR…RALLQYKNPE (277 aa)) is the Radical SAM core domain. The [4Fe-4S] cluster site is built by Cys-299, Cys-303, and Cys-306.

This sequence belongs to the UPF0313 family. The cofactor is [4Fe-4S] cluster.

This chain is UPF0313 protein UNCMA_01890, found in Methanocella arvoryzae (strain DSM 22066 / NBRC 105507 / MRE50).